The following is a 426-amino-acid chain: Serine--tRNA ligase (426 aa).

Thr231–Glu233 lines the L-serine pocket. Residue Arg262–Glu264 participates in ATP binding. Glu285 contributes to the L-serine binding site. Glu349–Ser352 serves as a coordination point for ATP. An L-serine-binding site is contributed by Ser385.

This sequence belongs to the class-II aminoacyl-tRNA synthetase family. Type-1 seryl-tRNA synthetase subfamily. In terms of assembly, homodimer. The tRNA molecule binds across the dimer.

The protein localises to the cytoplasm. The enzyme catalyses tRNA(Ser) + L-serine + ATP = L-seryl-tRNA(Ser) + AMP + diphosphate + H(+). The catalysed reaction is tRNA(Sec) + L-serine + ATP = L-seryl-tRNA(Sec) + AMP + diphosphate + H(+). It participates in aminoacyl-tRNA biosynthesis; selenocysteinyl-tRNA(Sec) biosynthesis; L-seryl-tRNA(Sec) from L-serine and tRNA(Sec): step 1/1. Catalyzes the attachment of serine to tRNA(Ser). Is also able to aminoacylate tRNA(Sec) with serine, to form the misacylated tRNA L-seryl-tRNA(Sec), which will be further converted into selenocysteinyl-tRNA(Sec). The polypeptide is Serine--tRNA ligase (Lysinibacillus sphaericus (strain C3-41)).